Reading from the N-terminus, the 402-residue chain is Protein FixF (402 aa).

In Sinorhizobium fredii (strain NBRC 101917 / NGR234), this protein is Protein FixF (fixF).